Reading from the N-terminus, the 359-residue chain is Probable isoaspartyl peptidase/L-asparaginase 3 (359 aa).

The Nucleophile role is filled by Thr-224. Residues 252–255 (RVGD) and 275–278 (TGDG) each bind substrate.

Belongs to the Ntn-hydrolase family. As to quaternary structure, heterotetramer of two alpha and two beta chains arranged as a dimer of alpha/beta heterodimers. In terms of processing, cleaved into an alpha and beta chain by autocatalysis; this activates the enzyme. The N-terminal residue of the beta subunit is responsible for the nucleophile hydrolase activity.

It catalyses the reaction Cleavage of a beta-linked Asp residue from the N-terminus of a polypeptide.. Functionally, acts in asparagine catabolism but also in the final steps of protein degradation via hydrolysis of a range of isoaspartyl dipeptides. The chain is Probable isoaspartyl peptidase/L-asparaginase 3 from Arabidopsis thaliana (Mouse-ear cress).